Consider the following 208-residue polypeptide: MARYTGPSCRLCRREGSELFLKGERCYTDKCAIKRRSYPPGQHGQGRIKVSDYGVQLREKQKVRRIYGILENQFRGYFETADRMKGVTGENLLFILERRLDNVAYRLGFATSRDEARQLVRHGHFTLNGRKVNIPSLQVKAGDVLQLREKSRKVAAISESLEGVVRRGIPQWLELEKDAFKGTVKAMPVREDITMPIQEQLIVELYSK.

The S4 RNA-binding domain maps to 98–159 (RRLDNVAYRL…KSRKVAAISE (62 aa)).

It belongs to the universal ribosomal protein uS4 family. In terms of assembly, part of the 30S ribosomal subunit. Contacts protein S5. The interaction surface between S4 and S5 is involved in control of translational fidelity.

Its function is as follows. One of the primary rRNA binding proteins, it binds directly to 16S rRNA where it nucleates assembly of the body of the 30S subunit. In terms of biological role, with S5 and S12 plays an important role in translational accuracy. The polypeptide is Small ribosomal subunit protein uS4 (Geobacter sp. (strain M21)).